We begin with the raw amino-acid sequence, 445 residues long: Glutamyl-tRNA reductase (445 aa).

Residues 49–52 (TCNR), Ser109, 114–116 (ETQ), and Gln120 each bind substrate. Cys50 acts as the Nucleophile in catalysis. 189 to 194 (GAGEMS) serves as a coordination point for NADP(+).

This sequence belongs to the glutamyl-tRNA reductase family. In terms of assembly, homodimer.

It catalyses the reaction (S)-4-amino-5-oxopentanoate + tRNA(Glu) + NADP(+) = L-glutamyl-tRNA(Glu) + NADPH + H(+). It functions in the pathway porphyrin-containing compound metabolism; protoporphyrin-IX biosynthesis; 5-aminolevulinate from L-glutamyl-tRNA(Glu): step 1/2. Its function is as follows. Catalyzes the NADPH-dependent reduction of glutamyl-tRNA(Glu) to glutamate 1-semialdehyde (GSA). The polypeptide is Glutamyl-tRNA reductase (Staphylococcus carnosus (strain TM300)).